We begin with the raw amino-acid sequence, 173 residues long: Putative pre-16S rRNA nuclease (173 aa).

The protein belongs to the YqgF nuclease family.

The protein localises to the cytoplasm. In terms of biological role, could be a nuclease involved in processing of the 5'-end of pre-16S rRNA. The sequence is that of Putative pre-16S rRNA nuclease from Rhodopirellula baltica (strain DSM 10527 / NCIMB 13988 / SH1).